We begin with the raw amino-acid sequence, 310 residues long: Putative HTH-type transcriptional regulatory protein SSO0942 (310 aa).

The region spanning 125 to 180 is the HTH cro/C1-type domain; that stretch reads LKHKREEMGYSIGDVAKFLGVSRKAIYDYEKGDSDVSLEVAEKLIDLFGDDIIGDV. Residues 136 to 155 constitute a DNA-binding region (H-T-H motif); sequence IGDVAKFLGVSRKAIYDYEK.

The sequence is that of Putative HTH-type transcriptional regulatory protein SSO0942 from Saccharolobus solfataricus (strain ATCC 35092 / DSM 1617 / JCM 11322 / P2) (Sulfolobus solfataricus).